The primary structure comprises 473 residues: Glycine--tRNA ligase (473 aa).

Residues Arg-101 and Glu-172 each contribute to the substrate site. ATP contacts are provided by residues 204-206 (RNE), 214-219 (FRTREF), 289-290 (EL), and 333-336 (GVER). 219–223 (FEQME) provides a ligand contact to substrate. 329–333 (EPSVG) provides a ligand contact to substrate.

Belongs to the class-II aminoacyl-tRNA synthetase family. As to quaternary structure, homodimer.

The protein resides in the cytoplasm. The catalysed reaction is tRNA(Gly) + glycine + ATP = glycyl-tRNA(Gly) + AMP + diphosphate. Catalyzes the attachment of glycine to tRNA(Gly). This Ureaplasma parvum serovar 3 (strain ATCC 27815 / 27 / NCTC 11736) protein is Glycine--tRNA ligase.